Consider the following 427-residue polypeptide: Probable purple acid phosphatase 20 (427 aa).

Residues 1–21 (MVKVLGLVAILLIVLAGNVLS) form the signal peptide. N85 carries N-linked (GlcNAc...) asparagine glycosylation. Fe cation is bound by residues D147, D174, and Y177. D174 lines the Zn(2+) pocket. Zn(2+) is bound by residues N207 and H291. N207 is a substrate binding site. H301 serves as the catalytic Proton donor. Position 330 (H330) interacts with Zn(2+). 330–332 (HVH) lines the substrate pocket. H332 is a binding site for Fe cation. N392 carries an N-linked (GlcNAc...) asparagine glycan.

The protein belongs to the metallophosphoesterase superfamily. Purple acid phosphatase family. As to quaternary structure, homodimer. It depends on Fe cation as a cofactor. Zn(2+) is required as a cofactor. In terms of tissue distribution, expressed flowers and siliques.

Its subcellular location is the secreted. The catalysed reaction is a phosphate monoester + H2O = an alcohol + phosphate. This Arabidopsis thaliana (Mouse-ear cress) protein is Probable purple acid phosphatase 20 (PAP20).